Here is a 98-residue protein sequence, read N- to C-terminus: Acylphosphatase-1 (98 aa).

Positions 8–98 (SVDYEVFGKV…LEHSTFSICK (91 aa)) constitute an Acylphosphatase-like domain. Residues Arg-23 and Asn-41 contribute to the active site.

This sequence belongs to the acylphosphatase family.

The catalysed reaction is an acyl phosphate + H2O = a carboxylate + phosphate + H(+). This is Acylphosphatase-1 (acyp1) from Xenopus tropicalis (Western clawed frog).